We begin with the raw amino-acid sequence, 269 residues long: Putative pyruvate, phosphate dikinase regulatory protein (269 aa).

147-154 is an ADP binding site; it reads GVSRTSKT.

It belongs to the pyruvate, phosphate/water dikinase regulatory protein family. PDRP subfamily.

The catalysed reaction is N(tele)-phospho-L-histidyl/L-threonyl-[pyruvate, phosphate dikinase] + ADP = N(tele)-phospho-L-histidyl/O-phospho-L-threonyl-[pyruvate, phosphate dikinase] + AMP + H(+). It carries out the reaction N(tele)-phospho-L-histidyl/O-phospho-L-threonyl-[pyruvate, phosphate dikinase] + phosphate + H(+) = N(tele)-phospho-L-histidyl/L-threonyl-[pyruvate, phosphate dikinase] + diphosphate. Its function is as follows. Bifunctional serine/threonine kinase and phosphorylase involved in the regulation of the pyruvate, phosphate dikinase (PPDK) by catalyzing its phosphorylation/dephosphorylation. This chain is Putative pyruvate, phosphate dikinase regulatory protein, found in Geotalea uraniireducens (strain Rf4) (Geobacter uraniireducens).